Reading from the N-terminus, the 176-residue chain is uncharacterized protein (176 aa).

Residues 15-28 (TSSNPPASASQSTG) show a composition bias toward polar residues. Disordered stretches follow at residues 15 to 100 (TSSN…TSAG) and 125 to 176 (ASLR…NLGA). Residues 43–52 (FIDKVTDKPS) show a composition bias toward basic and acidic residues.

This is an uncharacterized protein from Homo sapiens (Human).